We begin with the raw amino-acid sequence, 357 residues long: Glutamine synthetase root isozyme A (357 aa).

Positions 19-99 (IIAEYIWVGG…VICDVYTPAG (81 aa)) constitute a GS beta-grasp domain. The region spanning 106–357 (KRYNAAKIFS…AETTILWKKP (252 aa)) is the GS catalytic domain.

Belongs to the glutamine synthetase family. As to quaternary structure, homooctamer.

The protein resides in the cytoplasm. The enzyme catalyses L-glutamate + NH4(+) + ATP = L-glutamine + ADP + phosphate + H(+). This is Glutamine synthetase root isozyme A (GS3A) from Pisum sativum (Garden pea).